Consider the following 245-residue polypeptide: Enolase-phosphatase E1 (245 aa).

Belongs to the HAD-like hydrolase superfamily. MasA/MtnC family. Monomer. It depends on Mg(2+) as a cofactor.

It carries out the reaction 5-methylsulfanyl-2,3-dioxopentyl phosphate + H2O = 1,2-dihydroxy-5-(methylsulfanyl)pent-1-en-3-one + phosphate. It functions in the pathway amino-acid biosynthesis; L-methionine biosynthesis via salvage pathway; L-methionine from S-methyl-5-thio-alpha-D-ribose 1-phosphate: step 3/6. The protein operates within amino-acid biosynthesis; L-methionine biosynthesis via salvage pathway; L-methionine from S-methyl-5-thio-alpha-D-ribose 1-phosphate: step 4/6. Its function is as follows. Bifunctional enzyme that catalyzes the enolization of 2,3-diketo-5-methylthiopentyl-1-phosphate (DK-MTP-1-P) into the intermediate 2-hydroxy-3-keto-5-methylthiopentenyl-1-phosphate (HK-MTPenyl-1-P), which is then dephosphorylated to form the acireductone 1,2-dihydroxy-3-keto-5-methylthiopentene (DHK-MTPene). This chain is Enolase-phosphatase E1, found in Synechococcus sp. (strain CC9902).